The following is a 689-amino-acid chain: Elongation factor G (689 aa).

Residues 8-282 (ERTRNIGIMA…AVVDYLPAPT (275 aa)) form the tr-type G domain. GTP-binding positions include 17–24 (AHIDAGKT), 81–85 (DTPGH), and 135–138 (NKMD).

It belongs to the TRAFAC class translation factor GTPase superfamily. Classic translation factor GTPase family. EF-G/EF-2 subfamily.

The protein resides in the cytoplasm. In terms of biological role, catalyzes the GTP-dependent ribosomal translocation step during translation elongation. During this step, the ribosome changes from the pre-translocational (PRE) to the post-translocational (POST) state as the newly formed A-site-bound peptidyl-tRNA and P-site-bound deacylated tRNA move to the P and E sites, respectively. Catalyzes the coordinated movement of the two tRNA molecules, the mRNA and conformational changes in the ribosome. This is Elongation factor G from Desulforudis audaxviator (strain MP104C).